Reading from the N-terminus, the 360-residue chain is MISTVVWGTGNVGRLAIRAVEAHPALQLCAVIVHNPAKVGRDAGELGELDRLLGVEATDDIEAVLAARPRAVVYAASGDVRPDEALADITRAVRSGAVVVSPALYPLYDHRNAPPEFRDPVLAAVTEGGGSLFASGVDPGWGNDVLPLLLSGLGTTIDVIRCQEIFDYSTYDQPDSVRYLVGMGQPMDYEPMMLMPSIPTMVWGGQIRMMARALGVELDEIRETSDRRALDTTVTTRTMGEFGAGTQGAIRFEVQGIVEGEPRIVIEHVTRIHPSCAPDWPVPPDGGDGAHRVVIEGRPRIEVTIEATDEGENRSAGGNATAVGRLVGAIDWLVEAEPGLYDALDIPLRPAIGRLGRKQS.

It belongs to the amine dehydrogenase family. In terms of assembly, homodimer.

The enzyme catalyses a secondary alkyl amine + NAD(+) + H2O = a ketone + NH4(+) + NADH + H(+). The catalysed reaction is a secondary alkyl amine + NADP(+) + H2O = a ketone + NH4(+) + NADPH + H(+). It catalyses the reaction serinol + NAD(+) + H2O = dihydroxyacetone + NH4(+) + NADH + H(+). It carries out the reaction serinol + NADP(+) + H2O = dihydroxyacetone + NH4(+) + NADPH + H(+). The enzyme catalyses 2-aminopropan-1-ol + NAD(+) + H2O = hydroxyacetone + NH4(+) + NADH + H(+). The catalysed reaction is (R)-1-phenylethylamine + NAD(+) + H2O = acetophenone + NH4(+) + NADH + H(+). It catalyses the reaction (S)-1-phenylethylamine + NAD(+) + H2O = acetophenone + NH4(+) + NADH + H(+). It carries out the reaction (2S)-2-aminobutan-1-ol + NAD(+) + H2O = 1-hydroxy-2-butanone + NH4(+) + NADH + H(+). The enzyme catalyses (2S)-2-amino-3-methylbutan-1-ol + NAD(+) + H2O = 1-hydroxy-3-methylbutan-2-one + NH4(+) + NADH + H(+). The catalysed reaction is 2-aminopentan-1-ol + NAD(+) + H2O = 1-hydroxypentan-2-one + NH4(+) + NADH + H(+). It catalyses the reaction (S)-leucinol + NAD(+) + H2O = 1-hydroxy-4-methylpentan-2-one + NH4(+) + NADH + H(+). It carries out the reaction (S)-isoleucinol + NAD(+) + H2O = (3S)-1-hydroxy-3-methylpentan-2-one + NH4(+) + NADH + H(+). The enzyme catalyses (S)-methioninol + NAD(+) + H2O = 1-hydroxy-4-(methythio)butan-2-one + NH4(+) + NADH + H(+). The catalysed reaction is 2-aminocyclohexanol + NAD(+) + H2O = 2-hydroxycyclohexan-1-one + NH4(+) + NADH + H(+). It catalyses the reaction L-alanine + NAD(+) + H2O = pyruvate + NH4(+) + NADH + H(+). It carries out the reaction D-alanine + NAD(+) + H2O = pyruvate + NH4(+) + NADH + H(+). The enzyme catalyses L-aspartate + NAD(+) + H2O = oxaloacetate + NH4(+) + NADH + H(+). The catalysed reaction is D-aspartate + NAD(+) + H2O = oxaloacetate + NH4(+) + NADH + H(+). It catalyses the reaction L-glutamate + NAD(+) + H2O = 2-oxoglutarate + NH4(+) + NADH + H(+). It carries out the reaction D-glutamate + NAD(+) + H2O = 2-oxoglutarate + NH4(+) + NADH + H(+). The enzyme catalyses L-serine + NAD(+) + H2O = 3-hydroxypyruvate + NH4(+) + NADH + H(+). The catalysed reaction is D-serine + NAD(+) + H2O = 3-hydroxypyruvate + NH4(+) + NADH + H(+). It catalyses the reaction methylamine + NAD(+) + H2O = formaldehyde + NH4(+) + NADH + H(+). It carries out the reaction ethylamine + NAD(+) + H2O = acetaldehyde + NH4(+) + NADH + H(+). The enzyme catalyses propylamine + NAD(+) + H2O = propanal + NH4(+) + NADH + H(+). The catalysed reaction is butylamine + NAD(+) + H2O = butanal + NH4(+) + NADH + H(+). It catalyses the reaction hexylamine + NAD(+) + H2O = hexanal + NH4(+) + NADH + H(+). It carries out the reaction octylamine + NAD(+) + H2O = octanal + NH4(+) + NADH + H(+). The enzyme catalyses (R)-sec-butylamine + NAD(+) + H2O = butan-2-one + NH4(+) + NADH + H(+). The catalysed reaction is (S)-sec-butylamine + NAD(+) + H2O = butan-2-one + NH4(+) + NADH + H(+). It catalyses the reaction 2-aminopentane + NAD(+) + H2O = pentan-2-one + NH4(+) + NADH + H(+). It carries out the reaction 3-aminopentane + NAD(+) + H2O = pentan-3-one + NH4(+) + NADH + H(+). The enzyme catalyses (2R)-heptan-2-amine + NAD(+) + H2O = heptan-2-one + NH4(+) + NADH + H(+). The catalysed reaction is (2S)-heptan-2-amine + NAD(+) + H2O = heptan-2-one + NH4(+) + NADH + H(+). It catalyses the reaction benzylamine + NAD(+) + H2O = benzaldehyde + NH4(+) + NADH + H(+). It carries out the reaction 3-aminobutan-2-ol + NAD(+) + H2O = acetoin + NH4(+) + NADH + H(+). The enzyme catalyses 3-aminobutan-1-ol + NAD(+) + H2O = 4-hydroxybutan-2-one + NH4(+) + NADH + H(+). The catalysed reaction is 5-hydroxypentan-2-amine + NAD(+) + H2O = 5-hydroxypentan-2-one + NH4(+) + NADH + H(+). It catalyses the reaction 4-hydroxyhexan-3-amine + NAD(+) + H2O = 4-hydroxyhexan-3-one + NH4(+) + NADH + H(+). It carries out the reaction 5-hydroxyoctan-4-amine + NAD(+) + H2O = 5-hydroxyoctan-4-one + NH4(+) + NADH + H(+). The enzyme catalyses 2-hydroxy-1-phenylethan-1-amine + NAD(+) + H2O = 2-hydroxyacetophenone + NH4(+) + NADH + H(+). The catalysed reaction is hexan-2-amine + NAD(+) + H2O = hexan-2-one + NH4(+) + NADH + H(+). It catalyses the reaction 4-phenylbutan-2-amine + NAD(+) + H2O = 4-phenylbutan-2-one + NH4(+) + NADH + H(+). Its function is as follows. Catalyzes the reversible oxidative deaminations of a broad range of amines, amino alcohols and amino acids. Catalyzes the reversible dehydrogenation of serinol in the presence of NAD(+) to give dihydroxyacetone, ammonium ion and NADH, while NADP(+) shows a slight activity. Is also able to produce 2-amino-1-propanol and aspartate by the reductive amination of the corresponding keto alcohol (hydroxyacetone) and keto acid (oxaloacetate) in the presence of ammonium ions and NADH, and that of acetophenone from phenylethylamine by the oxidative deamination in the presence of NAD(+). In Streptomyces virginiae (Streptomyces cinnamonensis), this protein is Amine dehydrogenase.